Here is a 122-residue protein sequence, read N- to C-terminus: Large ribosomal subunit protein uL18 (122 aa).

Belongs to the universal ribosomal protein uL18 family. Part of the 50S ribosomal subunit; part of the 5S rRNA/L5/L18/L25 subcomplex. Contacts the 5S and 23S rRNAs.

Functionally, this is one of the proteins that bind and probably mediate the attachment of the 5S RNA into the large ribosomal subunit, where it forms part of the central protuberance. This chain is Large ribosomal subunit protein uL18, found in Hydrogenobaculum sp. (strain Y04AAS1).